Consider the following 226-residue polypeptide: uncharacterized protein (226 aa).

It to L.innocua lin1255, lin1742 and lin2408.

This is an uncharacterized protein from Listeria innocua serovar 6a (strain ATCC BAA-680 / CLIP 11262).